Reading from the N-terminus, the 497-residue chain is Glycerol kinase (497 aa).

ADP is bound at residue Thr-11. ATP contacts are provided by Thr-11, Thr-12, and Ser-13. Position 11 (Thr-11) interacts with sn-glycerol 3-phosphate. Arg-15 contributes to the ADP binding site. 4 residues coordinate sn-glycerol 3-phosphate: Arg-81, Glu-82, Tyr-133, and Asp-242. Glycerol is bound by residues Arg-81, Glu-82, Tyr-133, Asp-242, and Gln-243. Positions 264 and 306 each coordinate ADP. ATP is bound by residues Thr-264, Gly-306, Gln-310, and Gly-407. ADP-binding residues include Gly-407 and Asn-411.

This sequence belongs to the FGGY kinase family.

The catalysed reaction is glycerol + ATP = sn-glycerol 3-phosphate + ADP + H(+). The protein operates within polyol metabolism; glycerol degradation via glycerol kinase pathway; sn-glycerol 3-phosphate from glycerol: step 1/1. Its activity is regulated as follows. Inhibited by fructose 1,6-bisphosphate (FBP). Functionally, key enzyme in the regulation of glycerol uptake and metabolism. Catalyzes the phosphorylation of glycerol to yield sn-glycerol 3-phosphate. This Alcanivorax borkumensis (strain ATCC 700651 / DSM 11573 / NCIMB 13689 / SK2) protein is Glycerol kinase.